We begin with the raw amino-acid sequence, 102 residues long: Thioredoxin (102 aa).

In terms of domain architecture, Thioredoxin spans 2-102 (LHIDELTFEN…ILIHTINKYL (101 aa)). Residues cysteine 29 and cysteine 32 each act as nucleophile in the active site. Residues cysteine 29 and cysteine 32 are joined by a disulfide bond.

The protein belongs to the thioredoxin family.

The protein resides in the plastid. The protein localises to the chloroplast. Its function is as follows. Participates in various redox reactions through the reversible oxidation of its active center dithiol to a disulfide and catalyzes dithiol-disulfide exchange reactions. The polypeptide is Thioredoxin (trxA) (Cyanidioschyzon merolae (strain NIES-3377 / 10D) (Unicellular red alga)).